Here is a 137-residue protein sequence, read N- to C-terminus: Bombinin-like peptides 1 (137 aa).

Positions 1-18 are cleaved as a signal peptide; sequence MNFKYIVAVSILIASAYA. Asparagine 70 bears the Asparagine amide mark. Residues 91–112 form a disordered region; it reads LDSFEHPEEASEKETRGFNQEE. Isoleucine 118 is subject to D-allo-isoleucine. An Isoleucine amide modification is found at isoleucine 136.

It belongs to the bombinin family. As to expression, expressed by the skin glands.

The protein resides in the secreted. Has antimicrobial activity, but no hemolytic activity. Preliminary evidence indicates that this peptide does not lyse and thus kill the bacteria by its antimicrobial activity. In terms of biological role, bombinin H has antibacterial and hemolytic activity. In Bombina variegata (Yellow-bellied toad), this protein is Bombinin-like peptides 1.